A 601-amino-acid polypeptide reads, in one-letter code: 66 kDa stress protein (601 aa).

WD repeat units follow at residues 56 to 95, 100 to 143, 145 to 184, 187 to 226, 233 to 272, 318 to 357, 435 to 478, 483 to 522, 526 to 565, and 569 to 600; these read EHAQ…HPLK, VLSG…GEIT, HSKA…FKHA, EHTR…KVGA, AHAL…LTTF, GHNK…AVPI, ASTT…LSEQ, GHRG…IKVE, YHNA…KHIA, and AHRG…WTIK.

Belongs to the WD repeat AIP1 family.

Its function is as follows. Associated with the process of cyst formation. This chain is 66 kDa stress protein, found in Physarum polycephalum (Slime mold).